Consider the following 83-residue polypeptide: Colicin-E5 immunity protein (83 aa).

In terms of biological role, this protein is able to protect a cell, which harbors the plasmid ColE5 encoding colicin E5, against colicin E5. The polypeptide is Colicin-E5 immunity protein (imm) (Escherichia coli).